A 476-amino-acid chain; its full sequence is Aspartyl/glutamyl-tRNA(Asn/Gln) amidotransferase subunit B (476 aa).

Belongs to the GatB/GatE family. GatB subfamily. As to quaternary structure, heterotrimer of A, B and C subunits.

It catalyses the reaction L-glutamyl-tRNA(Gln) + L-glutamine + ATP + H2O = L-glutaminyl-tRNA(Gln) + L-glutamate + ADP + phosphate + H(+). It carries out the reaction L-aspartyl-tRNA(Asn) + L-glutamine + ATP + H2O = L-asparaginyl-tRNA(Asn) + L-glutamate + ADP + phosphate + 2 H(+). Allows the formation of correctly charged Asn-tRNA(Asn) or Gln-tRNA(Gln) through the transamidation of misacylated Asp-tRNA(Asn) or Glu-tRNA(Gln) in organisms which lack either or both of asparaginyl-tRNA or glutaminyl-tRNA synthetases. The reaction takes place in the presence of glutamine and ATP through an activated phospho-Asp-tRNA(Asn) or phospho-Glu-tRNA(Gln). The sequence is that of Aspartyl/glutamyl-tRNA(Asn/Gln) amidotransferase subunit B from Clostridium botulinum (strain 657 / Type Ba4).